The sequence spans 171 residues: Peptide deformylase (171 aa).

Cys91 and His133 together coordinate Fe cation. The active site involves Glu134. His137 lines the Fe cation pocket.

It belongs to the polypeptide deformylase family. The cofactor is Fe(2+).

It carries out the reaction N-terminal N-formyl-L-methionyl-[peptide] + H2O = N-terminal L-methionyl-[peptide] + formate. Its function is as follows. Removes the formyl group from the N-terminal Met of newly synthesized proteins. Requires at least a dipeptide for an efficient rate of reaction. N-terminal L-methionine is a prerequisite for activity but the enzyme has broad specificity at other positions. This chain is Peptide deformylase, found in Mannheimia succiniciproducens (strain KCTC 0769BP / MBEL55E).